The chain runs to 758 residues: Aspartyl/asparaginyl beta-hydroxylase (758 aa).

A disordered region spans residues 1-46 (MAQRKNAKSSGNSSSSGSGSGSTSAGSSSPGARRETKHGGHKNGRK). Topologically, residues 1–53 (MAQRKNAKSSGNSSSSGSGSGSTSAGSSSPGARRETKHGGHKNGRKGGLSGTS) are cytoplasmic. Residues 9–31 (SSGNSSSSGSGSGSTSAGSSSPG) are compositionally biased toward low complexity. S14 is modified (phosphoserine). Residues 54 to 74 (FFTWFMVIALLGVWTSVAVVW) traverse the membrane as a helical; Signal-anchor for type II membrane protein segment. L64 is a glycosylation site (N-linked (GlcNAc...) asparagine). The Lumenal portion of the chain corresponds to 75–758 (FDLVDYEEVL…PQQRRSLPAI (684 aa)). Ca(2+)-binding residues include D91, D93, D95, D97, and D102. Disordered regions lie at residues 111-140 (ERST…EAEP) and 304-324 (EEQQ…EQKA). Residues 313 to 324 (TNRKTDDPEQKA) show a composition bias toward basic and acidic residues. The TPR 1 repeat unit spans residues 341-374 (IKAELDAAEKLRKRGKIEEAVNAFKELVRKYPQS). N452 carries N-linked (GlcNAc...) asparagine glycosylation. TPR repeat units lie at residues 454–487 (TSLK…TPND), 489–521 (FAKV…GDPG), and 525–557 (GRFY…GHFA). W625 contributes to the 2-oxoglutarate binding site. C641 and C648 are oxidised to a cystine. Position 668 (S668) interacts with 2-oxoglutarate. H679 serves as a coordination point for Fe cation. Residue 688 to 690 (RMH) coordinates 2-oxoglutarate. N-linked (GlcNAc...) asparagine glycosylation occurs at N706. H725 is a binding site for Fe cation. Residue R735 participates in 2-oxoglutarate binding.

The protein belongs to the aspartyl/asparaginyl beta-hydroxylase family. Monomer. Isoform 8 interacts with ORAI1 and STIM1. Isoform 4 interacts with CASQ2. It depends on Fe cation as a cofactor. As to expression, isoform 1 is detected in all tissues tested. Isoform 8 is mainly expressed in pancreas, heart, brain, kidney and liver. Isoform 8 is expressed in kidney (at protein level).

Its subcellular location is the endoplasmic reticulum membrane. The protein resides in the sarcoplasmic reticulum membrane. The enzyme catalyses L-aspartyl-[protein] + 2-oxoglutarate + O2 = 3-hydroxy-L-aspartyl-[protein] + succinate + CO2. Functionally, specifically hydroxylates an Asp or Asn residue in certain epidermal growth factor-like (EGF) domains of a number of proteins. In terms of biological role, membrane-bound Ca(2+)-sensing protein, which is a structural component of the ER-plasma membrane junctions. Isoform 8 regulates the activity of Ca(+2) released-activated Ca(+2) (CRAC) channels in T-cells. In Homo sapiens (Human), this protein is Aspartyl/asparaginyl beta-hydroxylase (ASPH).